The chain runs to 214 residues: Transcription factor MYB24 (214 aa).

2 consecutive HTH myb-type domains span residues 14 to 66 (DAEV…LNYL) and 67 to 121 (RPDV…QKYI). DNA-binding regions (H-T-H motif) lie at residues 42–66 (WNSL…LNYL) and 94–117 (WSKI…RTKI).

Interacts (via N-terminus) with TIFY10A/JAZ1, TIFY5A/JAZ8 AND TIFY3A/JAZ11. As to expression, expressed specifically in flowers. Expressed in all four whorls of the flower and in the vascular tissue of stamen filament and sepals. Detected in male and female gametophytes, especially in microspores and ovules. Weakly expressed in petals and the upper part of pistils.

Its subcellular location is the nucleus. Functionally, transcription factor acting redundantly with MYB21 and MYB57 to control stamen filament elongation in the late developed flowers. Contributes with MYB21 to induction of MYB108 by jasmonate. Repressed at the transcript levels by DELLA proteins. In Arabidopsis thaliana (Mouse-ear cress), this protein is Transcription factor MYB24 (MYB24).